The following is a 222-amino-acid chain: Germin-like protein subfamily 1 member 5 (222 aa).

The first 24 residues, 1–24, serve as a signal peptide directing secretion; it reads MKGLLHFLLAKIILLALASSFVYC. An intrachain disulfide couples Cys-34 to Cys-50. 2 N-linked (GlcNAc...) asparagine glycosylation sites follow: Asn-38 and Asn-71. One can recognise a Cupin type-1 domain in the interval 64–215; the sequence is SGLNVPGNTS…AFALDFNKVK (152 aa). Positions 112, 114, and 119 each coordinate Mn(2+). Residue Asn-139 is glycosylated (N-linked (GlcNAc...) asparagine). His-163 provides a ligand contact to Mn(2+).

It belongs to the germin family. Oligomer (believed to be a pentamer but probably hexamer).

It is found in the secreted. The protein resides in the extracellular space. It localises to the apoplast. In terms of biological role, may play a role in plant defense. Probably has no oxalate oxidase activity even if the active site is conserved. This is Germin-like protein subfamily 1 member 5 from Arabidopsis thaliana (Mouse-ear cress).